The sequence spans 273 residues: Zinc finger protein 80 (273 aa).

The C2H2-type 1 zinc-finger motif lies at 49-71 (YKCKECGSVFNKNSLLVRHQQIH). The C2H2-type 2; degenerate zinc finger occupies 77–99 (YEYQECGKAFPEKVDFVRHMRIH). A C2H2-type 3; atypical zinc finger spans residues 105–127 (CKCVECRKVFNRRSHLLCYRQIH). 4 C2H2-type zinc fingers span residues 133–155 (YECS…RVTH), 161–183 (FGCK…MKIH), 187–211 (KPCK…SMTH), and 217–239 (YECK…TRSH).

Belongs to the krueppel C2H2-type zinc-finger protein family.

The protein localises to the nucleus. Functionally, may be involved in transcriptional regulation. This chain is Zinc finger protein 80 (ZNF80), found in Pan troglodytes (Chimpanzee).